Consider the following 435-residue polypeptide: Trigger factor (435 aa).

The 86-residue stretch at 161–246 (DDQVTLDFEG…LTKVEEQILP (86 aa)) folds into the PPIase FKBP-type domain.

Belongs to the FKBP-type PPIase family. Tig subfamily.

It is found in the cytoplasm. It carries out the reaction [protein]-peptidylproline (omega=180) = [protein]-peptidylproline (omega=0). Functionally, involved in protein export. Acts as a chaperone by maintaining the newly synthesized protein in an open conformation. Functions as a peptidyl-prolyl cis-trans isomerase. The sequence is that of Trigger factor from Psychromonas ingrahamii (strain DSM 17664 / CCUG 51855 / 37).